Reading from the N-terminus, the 183-residue chain is UPF0397 protein VFMJ11_1662 (183 aa).

5 helical membrane passes run 8 to 28 (VVVI…MFGI), 41 to 61 (AVLA…VGFI), 75 to 95 (WLTW…FPII), 110 to 130 (FLIF…TSAF), and 147 to 167 (LCII…FILN).

It belongs to the UPF0397 family.

The protein localises to the cell membrane. This Aliivibrio fischeri (strain MJ11) (Vibrio fischeri) protein is UPF0397 protein VFMJ11_1662.